The following is a 79-amino-acid chain: Sec-independent protein translocase protein TatA (79 aa).

A helical transmembrane segment spans residues 1–21 (MGGLQPWHWVIVIAVFVLLFG). Residues 43–52 (IKEMQSEGKS) are compositionally biased toward basic and acidic residues. Residues 43 to 79 (IKEMQSEGKSDNPPATPITSERVDTNPTAEQPDKRSA) are disordered.

Belongs to the TatA/E family. The Tat system comprises two distinct complexes: a TatABC complex, containing multiple copies of TatA, TatB and TatC subunits, and a separate TatA complex, containing only TatA subunits. Substrates initially bind to the TatABC complex, which probably triggers association of the separate TatA complex to form the active translocon.

It localises to the cell membrane. In terms of biological role, part of the twin-arginine translocation (Tat) system that transports large folded proteins containing a characteristic twin-arginine motif in their signal peptide across membranes. TatA could form the protein-conducting channel of the Tat system. The protein is Sec-independent protein translocase protein TatA of Mycobacterium sp. (strain JLS).